The following is a 357-amino-acid chain: H-2 class I histocompatibility antigen, D-37 alpha chain (357 aa).

A signal peptide spans M1 to S20. The alpha-1 stretch occupies residues S21–D110. Residues S21 to M304 are Extracellular-facing. N-linked (GlcNAc...) asparagine glycosylation is present at N106. The segment at E111 to S202 is alpha-2. C121 and C184 are oxidised to a cystine. The N-linked (GlcNAc...) asparagine glycan is linked to N196. The interval D203–W294 is alpha-3. In terms of domain architecture, Ig-like C1-type spans P205–R293. C223 and C279 are oxidised to a cystine. Residues E295–M304 form a connecting peptide region. Residues V305 to M327 traverse the membrane as a helical segment. The Cytoplasmic segment spans residues K328–A357. The residue at position 347 (S347) is a Phosphoserine.

Belongs to the MHC class I family. As to quaternary structure, heterodimer of an alpha chain and a beta chain (beta-2-microglobulin).

Its subcellular location is the membrane. Involved in the presentation of foreign antigens to the immune system. The protein is H-2 class I histocompatibility antigen, D-37 alpha chain (H2-T23) of Mus musculus (Mouse).